A 180-amino-acid polypeptide reads, in one-letter code: MSEPELQLVARRIRSFPDFPVQGVLFRDISPLLKDPVSFRASIHLLASHLKSTHSGKIDYIAGLDSRGFLFGPSLAQELGVGCVLIRKRGKLPGPTLSASYALEYGKAELEIQKDALEPGQRVVIVDDLLATGGTMCAACELLNQLRAEVVECVSLVELTSLKGRERLGPIPYFSLLQYE.

Position 2 is an N-acetylserine (serine 2). Serine 15 and serine 30 each carry phosphoserine. Tyrosine 60 bears the Phosphotyrosine mark. Phosphoserine is present on serine 66. The residue at position 114 (lysine 114) is an N6-acetyllysine. At threonine 135 the chain carries Phosphothreonine.

It belongs to the purine/pyrimidine phosphoribosyltransferase family. As to quaternary structure, homodimer.

The protein resides in the cytoplasm. The enzyme catalyses AMP + diphosphate = 5-phospho-alpha-D-ribose 1-diphosphate + adenine. It participates in purine metabolism; AMP biosynthesis via salvage pathway; AMP from adenine: step 1/1. Functionally, catalyzes a salvage reaction resulting in the formation of AMP, that is energically less costly than de novo synthesis. The chain is Adenine phosphoribosyltransferase from Stochomys longicaudatus (Target rat).